A 153-amino-acid chain; its full sequence is Ribosome maturation factor RimP (153 aa).

It belongs to the RimP family.

The protein resides in the cytoplasm. Required for maturation of 30S ribosomal subunits. The protein is Ribosome maturation factor RimP of Picosynechococcus sp. (strain ATCC 27264 / PCC 7002 / PR-6) (Agmenellum quadruplicatum).